Consider the following 102-residue polypeptide: Urease subunit beta (102 aa).

Belongs to the urease beta subunit family. As to quaternary structure, heterotrimer of UreA (gamma), UreB (beta) and UreC (alpha) subunits. Three heterotrimers associate to form the active enzyme.

It is found in the cytoplasm. It catalyses the reaction urea + 2 H2O + H(+) = hydrogencarbonate + 2 NH4(+). It functions in the pathway nitrogen metabolism; urea degradation; CO(2) and NH(3) from urea (urease route): step 1/1. This is Urease subunit beta from Opitutus terrae (strain DSM 11246 / JCM 15787 / PB90-1).